The sequence spans 205 residues: High frequency lysogenization protein HflD homolog (205 aa).

This sequence belongs to the HflD family.

The protein resides in the cytoplasm. Its subcellular location is the cell inner membrane. This is High frequency lysogenization protein HflD homolog from Alkalilimnicola ehrlichii (strain ATCC BAA-1101 / DSM 17681 / MLHE-1).